The following is a 211-amino-acid chain: UPF0637 protein BLi01683/BL05149 (211 aa).

It belongs to the UPF0637 family.

The protein is UPF0637 protein BLi01683/BL05149 of Bacillus licheniformis (strain ATCC 14580 / DSM 13 / JCM 2505 / CCUG 7422 / NBRC 12200 / NCIMB 9375 / NCTC 10341 / NRRL NRS-1264 / Gibson 46).